An 84-amino-acid chain; its full sequence is Small ribosomal subunit protein bS18B (84 aa).

Belongs to the bacterial ribosomal protein bS18 family. As to quaternary structure, part of the 30S ribosomal subunit. Forms a tight heterodimer with protein bS6.

Its function is as follows. Binds as a heterodimer with protein bS6 to the central domain of the 16S rRNA, where it helps stabilize the platform of the 30S subunit. The polypeptide is Small ribosomal subunit protein bS18B (Mycolicibacterium smegmatis (strain ATCC 700084 / mc(2)155) (Mycobacterium smegmatis)).